The following is a 395-amino-acid chain: S-adenosylmethionine synthase (395 aa).

Histidine 15 is a binding site for ATP. Aspartate 17 lines the Mg(2+) pocket. Glutamate 43 contacts K(+). L-methionine is bound by residues glutamate 56 and glutamine 99. Positions 99–109 (QSPDIAMGVDE) are flexible loop. Residues 173–175 (DGK), 239–240 (RF), aspartate 248, 254–255 (RK), alanine 271, and lysine 275 contribute to the ATP site. Aspartate 248 is a binding site for L-methionine. L-methionine is bound at residue lysine 279.

This sequence belongs to the AdoMet synthase family. As to quaternary structure, homotetramer; dimer of dimers. Mg(2+) serves as cofactor. K(+) is required as a cofactor.

The protein resides in the cytoplasm. The catalysed reaction is L-methionine + ATP + H2O = S-adenosyl-L-methionine + phosphate + diphosphate. It functions in the pathway amino-acid biosynthesis; S-adenosyl-L-methionine biosynthesis; S-adenosyl-L-methionine from L-methionine: step 1/1. In terms of biological role, catalyzes the formation of S-adenosylmethionine (AdoMet) from methionine and ATP. The overall synthetic reaction is composed of two sequential steps, AdoMet formation and the subsequent tripolyphosphate hydrolysis which occurs prior to release of AdoMet from the enzyme. The polypeptide is S-adenosylmethionine synthase (Desulforudis audaxviator (strain MP104C)).